The sequence spans 196 residues: Large ribosomal subunit protein bL25 (196 aa).

The protein belongs to the bacterial ribosomal protein bL25 family. CTC subfamily. As to quaternary structure, part of the 50S ribosomal subunit; part of the 5S rRNA/L5/L18/L25 subcomplex. Contacts the 5S rRNA. Binds to the 5S rRNA independently of L5 and L18.

In terms of biological role, this is one of the proteins that binds to the 5S RNA in the ribosome where it forms part of the central protuberance. The sequence is that of Large ribosomal subunit protein bL25 from Geotalea daltonii (strain DSM 22248 / JCM 15807 / FRC-32) (Geobacter daltonii).